The primary structure comprises 584 residues: Outer membrane transporter CdiB-2 (584 aa).

An N-terminal signal peptide occupies residues 1-20 (MATRFAILPVTALITLTAQA). Residues 24–44 (PTPNDQAAAARANAEQNQQAQ) show a composition bias toward low complexity. Residues 24 to 72 (PTPNDQAAAARANAEQNQQAQQRRDAQQRDATVQAPGVRSDVPRPEAYP) form a disordered region. The POTRA domain maps to 98–171 (SKAQGASALP…GALKLALIPG (74 aa)).

The protein belongs to the TPS (TC 1.B.20) family.

The protein localises to the cell outer membrane. Functionally, potential outer membrane protein component of a toxin-immunity protein module, which functions as a cellular contact-dependent growth inhibition (CDI) system. CDI modules allow bacteria to communicate with and inhibit the growth of closely related neighboring bacteria in a contact-dependent fashion. This protein may be required for secretion and assembly of the CdiA toxin protein. Its function is as follows. Expression of this cdiAIB locus in B.thailandensis confers protection against other bacteria carrying the locus; growth inhibition requires cellular contact. Probable member of a two partner secretion pathway (TPS) in which it mediates the secretion of CdiA2. This chain is Outer membrane transporter CdiB-2 (cdiB2), found in Burkholderia pseudomallei (strain 1026b).